Reading from the N-terminus, the 95-residue chain is Co-chaperonin GroES (95 aa).

It belongs to the GroES chaperonin family. Heptamer of 7 subunits arranged in a ring. Interacts with the chaperonin GroEL.

It is found in the cytoplasm. In terms of biological role, together with the chaperonin GroEL, plays an essential role in assisting protein folding. The GroEL-GroES system forms a nano-cage that allows encapsulation of the non-native substrate proteins and provides a physical environment optimized to promote and accelerate protein folding. GroES binds to the apical surface of the GroEL ring, thereby capping the opening of the GroEL channel. The sequence is that of Co-chaperonin GroES from Marinobacter nauticus (strain ATCC 700491 / DSM 11845 / VT8) (Marinobacter aquaeolei).